Here is a 313-residue protein sequence, read N- to C-terminus: Olfactory receptor 5H15 (313 aa).

Over 1-28 the chain is Extracellular; that stretch reads MEEENATLLTEFVLTGFLYQPQWKIPLF. N5 carries N-linked (GlcNAc...) asparagine glycosylation. Residues 29–49 traverse the membrane as a helical segment; that stretch reads LAFLVIYLITIMGNLGLIAVI. Residues 50–56 lie on the Cytoplasmic side of the membrane; it reads WKDPHLH. The chain crosses the membrane as a helical span at residues 57–77; it reads IPMYLLLGNLAFVDAWISSTV. At 78-98 the chain is on the extracellular side; sequence TPKMLNNFLAKSKMISLSECK. Residues C97 and C179 are joined by a disulfide bond. The chain crosses the membrane as a helical span at residues 99–119; the sequence is IQFFSIAIGVTTECFLLATMA. The Cytoplasmic portion of the chain corresponds to 120-143; that stretch reads YDRYVAICKPLLYPAIMTNGLCIR. A helical membrane pass occupies residues 144-164; sequence LLILSYIAGILHALIHEGFLF. Topologically, residues 165-195 are extracellular; it reads RLTFCNSNIVHHIYCDTIPLSKISCTDSSIN. The helical transmembrane segment at 196–216 threads the bilayer; it reads FLMVFIFSGSIQVFSIVTILI. The Cytoplasmic portion of the chain corresponds to 217-240; sequence SYTFVLFTVLEKKSDKGVRKAFST. A helical transmembrane segment spans residues 241-261; the sequence is CGAHLFSVCLYYGPLLLMYVG. At 262-271 the chain is on the extracellular side; it reads PASPQADGQN. Residues 272-292 traverse the membrane as a helical segment; sequence MVEPLFYTVIIPLLNPIIYSL. The Cytoplasmic portion of the chain corresponds to 293–313; that stretch reads RNKQVIVSFIKMLKRNVKVSY.

Belongs to the G-protein coupled receptor 1 family.

The protein resides in the cell membrane. Its function is as follows. Odorant receptor. This chain is Olfactory receptor 5H15 (OR5H15), found in Homo sapiens (Human).